A 623-amino-acid polypeptide reads, in one-letter code: Transketolase (623 aa).

Met-1 carries the N-acetylmethionine modification. N6-acetyllysine occurs at positions 6 and 11. A substrate-binding site is contributed by His-37. Positions 40 and 77 each coordinate thiamine diphosphate. Ser-104 carries the post-translational modification Phosphoserine. Residue 123 to 125 coordinates thiamine diphosphate; that stretch reads GSL. The residue at position 144 (Lys-144) is an N6-acetyllysine. Residue Asp-155 participates in Mg(2+) binding. Residues Gly-156 and Asn-185 each coordinate thiamine diphosphate. Mg(2+) is bound by residues Asn-185 and Leu-187. Residues Lys-204, Lys-232, and Lys-241 each carry the N6-acetyllysine modification. Positions 244 and 258 each coordinate thiamine diphosphate. Residue His-258 coordinates substrate. Position 260 is an N6-acetyllysine (Lys-260). Residue Tyr-275 is modified to Phosphotyrosine. Thr-287 carries the phosphothreonine modification. Position 295 is a phosphoserine (Ser-295). Substrate is bound at residue Arg-318. Lys-352 participates in a covalent cross-link: Glycyl lysine isopeptide (Lys-Gly) (interchain with G-Cter in SUMO2). Glu-366 functions as the Proton donor in the catalytic mechanism. Phe-392 is a thiamine diphosphate binding site. Residues His-416 and Asp-424 each contribute to the substrate site. Gln-428 is a binding site for thiamine diphosphate. Substrate is bound at residue Arg-474. N6-acetyllysine is present on residues Lys-538 and Lys-603.

Belongs to the transketolase family. Homodimer. It depends on Mg(2+) as a cofactor. The cofactor is Ca(2+). Mn(2+) is required as a cofactor. Co(2+) serves as cofactor. Requires thiamine diphosphate as cofactor.

It carries out the reaction D-sedoheptulose 7-phosphate + D-glyceraldehyde 3-phosphate = aldehydo-D-ribose 5-phosphate + D-xylulose 5-phosphate. Functionally, catalyzes the transfer of a two-carbon ketol group from a ketose donor to an aldose acceptor, via a covalent intermediate with the cofactor thiamine pyrophosphate. The chain is Transketolase (TKT) from Pongo abelii (Sumatran orangutan).